A 604-amino-acid polypeptide reads, in one-letter code: Elongation factor 4 (604 aa).

A tr-type G domain is found at 7–190 (SRLRNFCIIA…IVDRVPAPPD (184 aa)). GTP-binding positions include 19–24 (DHGKST) and 136–139 (NKID).

The protein belongs to the TRAFAC class translation factor GTPase superfamily. Classic translation factor GTPase family. LepA subfamily.

The protein resides in the cell inner membrane. The enzyme catalyses GTP + H2O = GDP + phosphate + H(+). Functionally, required for accurate and efficient protein synthesis under certain stress conditions. May act as a fidelity factor of the translation reaction, by catalyzing a one-codon backward translocation of tRNAs on improperly translocated ribosomes. Back-translocation proceeds from a post-translocation (POST) complex to a pre-translocation (PRE) complex, thus giving elongation factor G a second chance to translocate the tRNAs correctly. Binds to ribosomes in a GTP-dependent manner. This chain is Elongation factor 4, found in Synechococcus sp. (strain RCC307).